The primary structure comprises 604 residues: Sulfite reductase [NADPH] flavoprotein alpha-component (604 aa).

One can recognise a Flavodoxin-like domain in the interval 65–203 (VTILYGSQTG…AAGQWHADVL (139 aa)). FMN contacts are provided by residues 71–76 (SQTGNG), 118–121 (STHG), and 154–163 (LGDSSYEFFC). Residues 236 to 453 (QNPYSAEVLV…VEPNKHFRLP (218 aa)) form the FAD-binding FR-type domain. Residues Thr-324, Leu-358, 392 to 395 (RLYS), 410 to 412 (TVA), and 425 to 428 (GGAS) contribute to the FAD site. Residues 524–525 (SR), 530–534 (KIYVQ), and Asp-566 each bind NADP(+). FAD is bound at residue Tyr-604.

It belongs to the NADPH-dependent sulphite reductase flavoprotein subunit CysJ family. The protein in the N-terminal section; belongs to the flavodoxin family. In the C-terminal section; belongs to the flavoprotein pyridine nucleotide cytochrome reductase family. As to quaternary structure, alpha(8)-beta(8). The alpha component is a flavoprotein, the beta component is a hemoprotein. It depends on FAD as a cofactor. Requires FMN as cofactor.

The catalysed reaction is hydrogen sulfide + 3 NADP(+) + 3 H2O = sulfite + 3 NADPH + 4 H(+). It functions in the pathway sulfur metabolism; hydrogen sulfide biosynthesis; hydrogen sulfide from sulfite (NADPH route): step 1/1. In terms of biological role, component of the sulfite reductase complex that catalyzes the 6-electron reduction of sulfite to sulfide. This is one of several activities required for the biosynthesis of L-cysteine from sulfate. The flavoprotein component catalyzes the electron flow from NADPH -&gt; FAD -&gt; FMN to the hemoprotein component. The chain is Sulfite reductase [NADPH] flavoprotein alpha-component from Shewanella sp. (strain MR-7).